The primary structure comprises 264 residues: Thymidylate synthase (264 aa).

DUMP is bound at residue Arg21. His51 lines the (6R)-5,10-methylene-5,6,7,8-tetrahydrofolate pocket. 126 to 127 (RR) lines the dUMP pocket. The Nucleophile role is filled by Cys146. DUMP is bound by residues 166-169 (RSAD), Asn177, and 207-209 (HLY). Asp169 contributes to the (6R)-5,10-methylene-5,6,7,8-tetrahydrofolate binding site. Ala263 serves as a coordination point for (6R)-5,10-methylene-5,6,7,8-tetrahydrofolate.

The protein belongs to the thymidylate synthase family. Bacterial-type ThyA subfamily. In terms of assembly, homodimer.

It localises to the cytoplasm. It carries out the reaction dUMP + (6R)-5,10-methylene-5,6,7,8-tetrahydrofolate = 7,8-dihydrofolate + dTMP. The protein operates within pyrimidine metabolism; dTTP biosynthesis. Its function is as follows. Catalyzes the reductive methylation of 2'-deoxyuridine-5'-monophosphate (dUMP) to 2'-deoxythymidine-5'-monophosphate (dTMP) while utilizing 5,10-methylenetetrahydrofolate (mTHF) as the methyl donor and reductant in the reaction, yielding dihydrofolate (DHF) as a by-product. This enzymatic reaction provides an intracellular de novo source of dTMP, an essential precursor for DNA biosynthesis. This chain is Thymidylate synthase, found in Bartonella quintana (strain Toulouse) (Rochalimaea quintana).